The following is a 122-amino-acid chain: Large ribosomal subunit protein uL14 (122 aa).

This sequence belongs to the universal ribosomal protein uL14 family. As to quaternary structure, part of the 50S ribosomal subunit. Forms a cluster with proteins L3 and L19. In the 70S ribosome, L14 and L19 interact and together make contacts with the 16S rRNA in bridges B5 and B8.

Its function is as follows. Binds to 23S rRNA. Forms part of two intersubunit bridges in the 70S ribosome. This chain is Large ribosomal subunit protein uL14, found in Roseiflexus castenholzii (strain DSM 13941 / HLO8).